The primary structure comprises 283 residues: Polyamine aminopropyltransferase (283 aa).

Positions 5–238 (STWIDEYHKG…GIWSWTFASE (234 aa)) constitute a PABS domain. Glutamine 32 provides a ligand contact to S-methyl-5'-thioadenosine. Spermidine-binding residues include histidine 63 and aspartate 87. Residues glutamate 107 and 139–140 (DG) contribute to the S-methyl-5'-thioadenosine site. Residue aspartate 158 is the Proton acceptor of the active site. Spermidine is bound at residue 158 to 161 (DCSD).

This sequence belongs to the spermidine/spermine synthase family. In terms of assembly, homodimer or homotetramer.

Its subcellular location is the cytoplasm. It carries out the reaction S-adenosyl 3-(methylsulfanyl)propylamine + putrescine = S-methyl-5'-thioadenosine + spermidine + H(+). The protein operates within amine and polyamine biosynthesis; spermidine biosynthesis; spermidine from putrescine: step 1/1. In terms of biological role, catalyzes the irreversible transfer of a propylamine group from the amino donor S-adenosylmethioninamine (decarboxy-AdoMet) to putrescine (1,4-diaminobutane) to yield spermidine. In Prochlorococcus marinus (strain MIT 9312), this protein is Polyamine aminopropyltransferase.